Consider the following 598-residue polypeptide: UvrABC system protein C (598 aa).

Residues 13–91 (TLPGVYRMVD…IKGLKPRFNI (79 aa)) enclose the GIY-YIG domain. The 36-residue stretch at 200–235 (TALTEEITAQMNAAAENLDFETAAYLRDRLRMLATV) folds into the UVR domain.

The protein belongs to the UvrC family. Interacts with UvrB in an incision complex.

It localises to the cytoplasm. Functionally, the UvrABC repair system catalyzes the recognition and processing of DNA lesions. UvrC both incises the 5' and 3' sides of the lesion. The N-terminal half is responsible for the 3' incision and the C-terminal half is responsible for the 5' incision. This is UvrABC system protein C from Thiobacillus denitrificans (strain ATCC 25259 / T1).